A 362-amino-acid chain; its full sequence is 3-dehydroquinate synthase (362 aa).

NAD(+) is bound by residues 71-76 (DGEQYK), 105-109 (GVVGD), 129-130 (TT), Lys142, Lys151, and 169-172 (CLKT). Positions 184, 247, and 264 each coordinate Zn(2+).

Belongs to the sugar phosphate cyclases superfamily. Dehydroquinate synthase family. The cofactor is Co(2+). It depends on Zn(2+) as a cofactor. NAD(+) serves as cofactor.

The protein resides in the cytoplasm. It carries out the reaction 7-phospho-2-dehydro-3-deoxy-D-arabino-heptonate = 3-dehydroquinate + phosphate. It functions in the pathway metabolic intermediate biosynthesis; chorismate biosynthesis; chorismate from D-erythrose 4-phosphate and phosphoenolpyruvate: step 2/7. Its function is as follows. Catalyzes the conversion of 3-deoxy-D-arabino-heptulosonate 7-phosphate (DAHP) to dehydroquinate (DHQ). In Escherichia coli O6:K15:H31 (strain 536 / UPEC), this protein is 3-dehydroquinate synthase.